Here is a 235-residue protein sequence, read N- to C-terminus: 2-C-methyl-D-erythritol 4-phosphate cytidylyltransferase (235 aa).

The protein belongs to the IspD/TarI cytidylyltransferase family. IspD subfamily.

The enzyme catalyses 2-C-methyl-D-erythritol 4-phosphate + CTP + H(+) = 4-CDP-2-C-methyl-D-erythritol + diphosphate. The protein operates within isoprenoid biosynthesis; isopentenyl diphosphate biosynthesis via DXP pathway; isopentenyl diphosphate from 1-deoxy-D-xylulose 5-phosphate: step 2/6. In terms of biological role, catalyzes the formation of 4-diphosphocytidyl-2-C-methyl-D-erythritol from CTP and 2-C-methyl-D-erythritol 4-phosphate (MEP). The chain is 2-C-methyl-D-erythritol 4-phosphate cytidylyltransferase from Pseudomonas fluorescens (strain SBW25).